Here is a 421-residue protein sequence, read N- to C-terminus: 3-isopropylmalate dehydratase large subunit (421 aa).

Residues Cys302, Cys362, and Cys365 each contribute to the [4Fe-4S] cluster site.

The protein belongs to the aconitase/IPM isomerase family. LeuC type 2 subfamily. Heterodimer of LeuC and LeuD. The cofactor is [4Fe-4S] cluster.

It catalyses the reaction (2R,3S)-3-isopropylmalate = (2S)-2-isopropylmalate. Its pathway is amino-acid biosynthesis; L-leucine biosynthesis; L-leucine from 3-methyl-2-oxobutanoate: step 2/4. In terms of biological role, catalyzes the isomerization between 2-isopropylmalate and 3-isopropylmalate, via the formation of 2-isopropylmaleate. This Campylobacter fetus subsp. fetus (strain 82-40) protein is 3-isopropylmalate dehydratase large subunit.